Consider the following 388-residue polypeptide: Beta-1,4-galactosyltransferase 5 (388 aa).

Over 1-14 the chain is Cytoplasmic; it reads MRARRGLLRLPRRS. Residues 15–35 form a helical; Signal-anchor for type II membrane protein membrane-spanning segment; that stretch reads LLAALFFFSLSSSLLYFVYVA. The Lumenal portion of the chain corresponds to 36-388; sequence PGIVNTYLFM…TPELAQVNEY (353 aa). Residues Asn-77, Asn-81, Asn-90, Asn-111, and Asn-128 are each glycosylated (N-linked (GlcNAc...) asparagine). Cys-114 and Cys-158 are joined by a disulfide. UDP-alpha-D-galactose is bound by residues 169–173, 208–210, 235–236, Tyr-264, and Trp-296; these read PFRNR, FNR, and VD. An intrachain disulfide couples Cys-229 to Cys-248. Position 236 (Asp-236) interacts with Mn(2+). 298–301 lines the N-acetyl-D-glucosamine pocket; sequence GEDD. Position 329 (His-329) interacts with Mn(2+). Position 329–330 (329–330) interacts with UDP-alpha-D-galactose; it reads HH. N-acetyl-D-glucosamine is bound at residue Arg-340. Asn-364 and Asn-373 each carry an N-linked (GlcNAc...) asparagine glycan.

It belongs to the glycosyltransferase 7 family. Mn(2+) serves as cofactor. In terms of tissue distribution, ubiquitously expressed.

The protein localises to the golgi apparatus. Its subcellular location is the golgi stack membrane. The enzyme catalyses a beta-D-glucosyl-(1&lt;-&gt;1')-N-acylsphing-4-enine + UDP-alpha-D-galactose = a beta-D-Gal-(1-&gt;4)-beta-D-Glc-(1&lt;-&gt;1)-Cer(d18:1(4E)) + UDP + H(+). It participates in protein modification; protein glycosylation. Its pathway is sphingolipid metabolism. Functionally, catalyzes the synthesis of lactosylceramide (LacCer) via the transfer of galactose from UDP-galactose to glucosylceramide (GlcCer). LacCer is the starting point in the biosynthesis of all gangliosides (membrane-bound glycosphingolipids) which play pivotal roles in the CNS including neuronal maturation and axonal and myelin formation. Plays a role in the glycosylation of BMPR1A and regulation of its protein stability. Essential for extraembryonic development during early embryogenesis. The polypeptide is Beta-1,4-galactosyltransferase 5 (Homo sapiens (Human)).